The chain runs to 87 residues: Small ribosomal subunit protein bS21 (87 aa).

The span at 47 to 63 shows a compositional bias: basic and acidic residues; that stretch reads YEKPSEKRARQKAEAVR. Residues 47 to 87 form a disordered region; that stretch reads YEKPSEKRARQKAEAVRRARKLARKRAQREGLLPMPKKPGR. Residues 64–73 show a composition bias toward basic residues; it reads RARKLARKRA.

This sequence belongs to the bacterial ribosomal protein bS21 family.

This chain is Small ribosomal subunit protein bS21, found in Caulobacter vibrioides (strain ATCC 19089 / CIP 103742 / CB 15) (Caulobacter crescentus).